The primary structure comprises 943 residues: Isoleucine--tRNA ligase (943 aa).

A 'HIGH' region motif is present at residues 58 to 68; sequence PYANGSIHIGH. Residue Glu567 participates in L-isoleucyl-5'-AMP binding. Positions 608 to 612 match the 'KMSKS' region motif; sequence KMSKS. Residue Lys611 coordinates ATP. Zn(2+) is bound by residues Cys906, Cys909, Cys926, and Cys929.

The protein belongs to the class-I aminoacyl-tRNA synthetase family. IleS type 1 subfamily. In terms of assembly, monomer. Zn(2+) is required as a cofactor.

The protein resides in the cytoplasm. The catalysed reaction is tRNA(Ile) + L-isoleucine + ATP = L-isoleucyl-tRNA(Ile) + AMP + diphosphate. Functionally, catalyzes the attachment of isoleucine to tRNA(Ile). As IleRS can inadvertently accommodate and process structurally similar amino acids such as valine, to avoid such errors it has two additional distinct tRNA(Ile)-dependent editing activities. One activity is designated as 'pretransfer' editing and involves the hydrolysis of activated Val-AMP. The other activity is designated 'posttransfer' editing and involves deacylation of mischarged Val-tRNA(Ile). This chain is Isoleucine--tRNA ligase, found in Pseudomonas paraeruginosa (strain DSM 24068 / PA7) (Pseudomonas aeruginosa (strain PA7)).